The primary structure comprises 584 residues: Membrane frizzled-related protein (584 aa).

The Cytoplasmic segment spans residues 1–69; the sequence is MKDYDDVILR…QPDCHFSWFC (69 aa). Residues 70-90 form a helical; Signal-anchor for type II membrane protein membrane-spanning segment; that stretch reads ILLLSGLLLLLLGLLVAVILA. The Extracellular portion of the chain corresponds to 91–584; it reads QLQATSLPRT…AASLEACSQP (494 aa). Positions 108–140 are disordered; sequence RGLTPMGVIPSTTPNTTTTTTTTTPARTGQQEA. Low complexity predominate over residues 119–132; that stretch reads TTPNTTTTTTTTTP. 2 disulfide bridges follow: C150-C176 and C203-C222. Residues 150-259 enclose the CUB 1 domain; the sequence is CGGLLPGPSG…SGFQAWYQAV (110 aa). Residue N233 is glycosylated (N-linked (GlcNAc...) asparagine). An LDL-receptor class A 1 domain is found at 265–301; sequence SCAHNEFHCDLLLCLKRDSVCDGITECADGSDEANCS. Disulfide bonds link C266–C278, C273–C291, C285–C300, C307–C333, and C360–C383. Residues 307 to 420 form the CUB 2 domain; it reads CGGNLTGLYG…GGFLATYQAI (114 aa). N421 carries an N-linked (GlcNAc...) asparagine glycan. Positions 426–460 constitute an LDL-receptor class A 2 domain; it reads GCPWAEFCQSGGYRDLQWMCDLWKDCANDSNDNCS. 7 disulfide bridges follow: C433–C451, C445–C459, C471–C533, C479–C526, C517–C554, C543–C581, and C547–C569. The N-linked (GlcNAc...) asparagine glycan is linked to N458. Positions 466 to 584 constitute an FZ domain; the sequence is QPDLTCEPVQ…AASLEACSQP (119 aa).

As to quaternary structure, interacts with C1QTNF5. As to expression, expressed in retinal pigment epithelium and ciliary epithelium of the eye.

The protein resides in the apical cell membrane. Functionally, may play a role in eye development. This Mus musculus (Mouse) protein is Membrane frizzled-related protein (Mfrp).